A 102-amino-acid polypeptide reads, in one-letter code: Protein CASC2, isoform 3 (102 aa).

As to expression, expressed in normal and neoplastic endometrial tissues.

Functionally, may act as a potential tumor suppressor. The polypeptide is Protein CASC2, isoform 3 (CASC2) (Homo sapiens (Human)).